The chain runs to 230 residues: Flagellar L-ring protein (230 aa).

An N-terminal signal peptide occupies residues 1–15 (MSRLPSLSSLCLAIA). The N-palmitoyl cysteine moiety is linked to residue cysteine 16. Residue cysteine 16 is the site of S-diacylglycerol cysteine attachment.

It belongs to the FlgH family. As to quaternary structure, the basal body constitutes a major portion of the flagellar organelle and consists of four rings (L,P,S, and M) mounted on a central rod.

The protein resides in the cell outer membrane. It is found in the bacterial flagellum basal body. Functionally, assembles around the rod to form the L-ring and probably protects the motor/basal body from shearing forces during rotation. The chain is Flagellar L-ring protein from Xanthomonas campestris pv. campestris (strain 8004).